We begin with the raw amino-acid sequence, 233 residues long: Octanoyltransferase (233 aa).

The BPL/LPL catalytic domain maps to 38 to 218 (AGGPDTLLLL…AVCDALDGVL (181 aa)). Residues 57–66 (RRTEPHERPL) show a composition bias toward basic and acidic residues. The tract at residues 57–77 (RRTEPHERPLDGTPVVDTDRG) is disordered. Substrate is bound by residues 76–83 (RGGKITWH), 148–150 (AIG), and 161–163 (GFA). The active-site Acyl-thioester intermediate is the cysteine 179.

Belongs to the LipB family.

The protein resides in the cytoplasm. It carries out the reaction octanoyl-[ACP] + L-lysyl-[protein] = N(6)-octanoyl-L-lysyl-[protein] + holo-[ACP] + H(+). Its pathway is protein modification; protein lipoylation via endogenous pathway; protein N(6)-(lipoyl)lysine from octanoyl-[acyl-carrier-protein]: step 1/2. Its function is as follows. Catalyzes the transfer of endogenously produced octanoic acid from octanoyl-acyl-carrier-protein onto the lipoyl domains of lipoate-dependent enzymes. Lipoyl-ACP can also act as a substrate although octanoyl-ACP is likely to be the physiological substrate. In Mycolicibacterium paratuberculosis (strain ATCC BAA-968 / K-10) (Mycobacterium paratuberculosis), this protein is Octanoyltransferase.